We begin with the raw amino-acid sequence, 512 residues long: Ankyrin repeat domain-containing protein SOWAHC (512 aa).

Phosphoserine is present on residues Ser82 and Ser125. The interval Leu126 to Ser248 is disordered. Over residues Pro173–Gly186 the composition is skewed to low complexity. Residue Ser205 is modified to Phosphoserine. Gly residues predominate over residues Pro214–Asp228. A compositionally biased stretch (low complexity) spans Ser229 to Ser248. ANK repeat units lie at residues Thr288–Leu317 and Gly327–Ile357. Position 395 is an omega-N-methylarginine (Arg395). Residues His427–Ser500 form a disordered region. The segment covering Met453–Phe462 has biased composition (basic residues). Residues Glu481–Glu492 are compositionally biased toward acidic residues.

This sequence belongs to the SOWAH family.

The chain is Ankyrin repeat domain-containing protein SOWAHC (Sowahc) from Mus musculus (Mouse).